The following is a 663-amino-acid chain: CXXC-type zinc finger protein 1 (663 aa).

The segment at 60–110 (QAYCICRSSDCSRFMIGCDGCEEWYHGDCIGITEKEAKHIKQYYCRRCKKE) adopts a PHD-type zinc-finger fold. Positions 134 to 161 (TSLNAPGVGPSGAAPAAAPVASATTSQQ) are enriched in low complexity. The tract at residues 134–183 (TSLNAPGVGPSGAAPAAAPVASATTSQQAPPPTTAAAKRKNSSAREPKMG) is disordered. A CXXC-type zinc finger spans residues 175-219 (SSAREPKMGKRCGTCEGCRRPNCNQCDACRVRVGHKPRCIFRTCV). Residues cysteine 186, cysteine 189, cysteine 192, cysteine 197, cysteine 200, cysteine 203, cysteine 213, and cysteine 218 each coordinate Zn(2+). Residues 230-254 (QATQAGPSRKREKAAPKSRNVQVGP) are disordered. The residue at position 258 (serine 258) is a Phosphoserine.

In terms of assembly, component of the SET1 complex, composed at least of the catalytic subunit Set1, wds/WDR5, Wdr82, Rbbp5, ash2, Cfp1/CXXC1, hcf and Dpy-30L1.

It localises to the nucleus. Component of the SET1 complex that specifically di- and trimethylates 'Lys-4' of histone H3. Essential for Set1 association with chromatin and trimethylation of histone H3 at 'Lys-4' at transcription puffs. Additionally, is critical for general chromosomal association of Set1. In Drosophila melanogaster (Fruit fly), this protein is CXXC-type zinc finger protein 1 (Cfp1).